The sequence spans 182 residues: Thioredoxin X, chloroplastic (182 aa).

The N-terminal 67 residues, 1–67 (MDSIVSSSTI…TRKSSSSVIR (67 aa)), are a transit peptide targeting the chloroplast. In terms of domain architecture, Thioredoxin spans 68-177 (CGGIKEIGES…LKEYIDGLLN (110 aa)). Residues Cys99 and Cys102 each act as nucleophile in the active site. A disulfide bond links Cys99 and Cys102.

The protein belongs to the thioredoxin family. In terms of tissue distribution, predominantly expressed in leaves.

It localises to the plastid. The protein localises to the chloroplast stroma. Functionally, probable thiol-disulfide oxidoreductase that may participate in various redox reactions. The sequence is that of Thioredoxin X, chloroplastic (ATHX) from Arabidopsis thaliana (Mouse-ear cress).